Reading from the N-terminus, the 565-residue chain is MEPKTKKQRSLYIPYAGPVLLEFPLLNKGSAFSMEERRNFNLLGLLPEVVETIEEQAERAWIQYQGFKTEIDKHIYLRNIQDTNETLFYRLVNNHLDEMMPVIYTPTVGAACERFSEIYRRSRGVFISYQNRHNMDDILQNVPNHNIKVIVVTDGERILGLGDQGIGGMGIPIGKLSLYTACGGISPAYTLPVVLDVGTNNQQLLNDPLYMGWRNPRITDDEYYEFVDEFIQAVKQRWPDVLLQFEDFAQKNAMPLLNRYRNEICSFNDDIQGTAAVTVGTLIAASRAAGGQLSEKKIVFLGAGSAGCGIAEMIIAQTQREGLSEEAARQKVFMVDRFGLLTDKMPNLLPFQTKLVQKRENLSDWDTDSDVLSLLDVVRNVKPDILIGVSGQTGLFTEEIIREMHKHCPRPIVMPLSNPTSRVEATPQDIIAWTEGNALVATGSPFNPVVWKDKIYPIAQCNNAFIFPGIGLGVIASGASRITDEMLMSASETLAQYSPLVLNGEGMVLPELKDIQKVSRAIAFAVGKMAQQQGVAVKTSAEALQQAIDDNFWQAEYRDYRRTSI.

Tyr-104 serves as the catalytic Proton donor. Arg-157 serves as a coordination point for NAD(+). The Proton acceptor role is filled by Lys-175. A divalent metal cation is bound by residues Glu-246, Asp-247, and Asp-270. 2 residues coordinate NAD(+): Asp-270 and Asn-418.

It belongs to the malic enzymes family. As to quaternary structure, homotetramer. The cofactor is Mg(2+). Mn(2+) is required as a cofactor.

The enzyme catalyses (S)-malate + NAD(+) = pyruvate + CO2 + NADH. The catalysed reaction is oxaloacetate + H(+) = pyruvate + CO2. The polypeptide is NAD-dependent malic enzyme (Escherichia coli O9:H4 (strain HS)).